The sequence spans 616 residues: Probable methyltransferase PMT2 (616 aa).

The Cytoplasmic segment spans residues 1 to 13; the sequence is MALKSSSADGKTR. A helical; Signal-anchor for type II membrane protein transmembrane segment spans residues 14 to 34; that stretch reads SSVQIFIVFSLCCFFYILGAW. At 35-616 the chain is on the lumenal side; the sequence is QRSGFGKGDS…YWVTNSTSTH (582 aa). N-linked (GlcNAc...) asparagine glycans are attached at residues Asn-205 and Asn-611.

The protein belongs to the methyltransferase superfamily.

It is found in the golgi apparatus membrane. This chain is Probable methyltransferase PMT2, found in Arabidopsis thaliana (Mouse-ear cress).